A 191-amino-acid polypeptide reads, in one-letter code: NF-kappa-B inhibitor-interacting Ras-like protein 2 (191 aa).

Positions Met-1 to Gly-191 are small GTPase-like. Residue Gly-11–Thr-18 participates in GTP binding. Residues Met-35–Tyr-43 carry the Effector region motif. GTP-binding positions include Asp-61–Leu-65 and Asn-120–Asp-123. Positions Gln-170–Gly-191 are disordered.

Belongs to the small GTPase superfamily. Ras family. KappaB-Ras subfamily.

The protein resides in the cytoplasm. Atypical Ras-like protein that acts as a potent regulator of NF-kappa-B activity by preventing the degradation of NF-kappa-B inhibitor beta (NFKBIB) by most signals, explaining why NFKBIB is more resistant to degradation. The chain is NF-kappa-B inhibitor-interacting Ras-like protein 2 (NKIRAS2) from Gallus gallus (Chicken).